The primary structure comprises 60 residues: Metallothionein (60 aa).

The segment at 1-28 is beta; sequence MDPCDCAKTGTCNCGTSCTCANCSCTKC. A divalent metal cation contacts are provided by C4, C6, C12, C14, C18, C20, C23, C25, C28, C32, C33, C35, C36, C40, C43, C47, C49, C54, C58, and C59. The segment at 29 to 60 is alpha; that stretch reads KKSCCECCPSGCSKCASGCACKDKTCDTNCCQ.

This sequence belongs to the metallothionein superfamily. Type 1 family.

Metallothioneins have a high content of cysteine residues that bind various heavy metals. The protein is Metallothionein (mt) of Gadus morhua (Atlantic cod).